The chain runs to 236 residues: Small ribosomal subunit protein uS2c (236 aa).

This sequence belongs to the universal ribosomal protein uS2 family.

It localises to the plastid. The protein resides in the chloroplast. This Pisum sativum (Garden pea) protein is Small ribosomal subunit protein uS2c (rps2).